Consider the following 248-residue polypeptide: MVLFFQIMVWCIVAGLGLYVYATWRFEAKVKEKMSAIRKTWYLLFVLGAMVYWTYEPTSLFTHWERYLIVAVSFALIDAFIFLSAYVKKLAGSELETDTREILEENNEMLHMYLNRLKTYQYLLKNEPIHVYYGSIDAYAEGIDKLLKTYADKMNLTASLCHYSTQADKDRLTEHMDDPADVQTRLDRKDVYYDQYGKVVLIPFTIETQNYVIKLTSDSIVTEFDYLLFTSLTSIYDLVLPIEEEGEG.

The Extracellular portion of the chain corresponds to 1–3 (MVL). A helical transmembrane segment spans residues 4–21 (FFQIMVWCIVAGLGLYVY). The Cytoplasmic segment spans residues 22–41 (ATWRFEAKVKEKMSAIRKTW). Residues 42–64 (YLLFVLGAMVYWTYEPTSLFTHW) traverse the membrane as a helical segment. The Extracellular portion of the chain corresponds to 65 to 67 (ERY). The chain crosses the membrane as a helical span at residues 68 to 87 (LIVAVSFALIDAFIFLSAYV). Residues 88 to 248 (KKLAGSELET…VLPIEEEGEG (161 aa)) are Cytoplasmic-facing.

It belongs to the SpoIISA toxin family. Probably forms an oligomer; X-ray data suggests the inactive complex forms a heterotetramer of SpoIISA(2)-SpoIISB(2), which inactivates the toxic activity of SpoIISA.

The protein resides in the cell membrane. In terms of biological role, toxic component of a type II toxin-antitoxin (TA) system. Its toxic activity is neutralized by cognate antitoxin SpoIISB. Expression in the absence of SpoIISB permits sporulation to stage II, when plasmolysis zones and holes in the peptidoglycan layer are observed, resulting in cell death. Lethal when synthesized during vegetative growth in the absence of SpoIISB. In E.coli both the membrane bound and soluble domain are required in cis for toxin activity. This Bacillus subtilis (strain 168) protein is Stage II sporulation protein SA (spoIISA).